A 397-amino-acid polypeptide reads, in one-letter code: MTQCGDRRLFALNYHGAIQTPPPTDPNAAPAHRPAPRPALGRCRPPHRRRRRLRPPVRPPLSLPVALTTRSSAAQVGYLQDPFASLLYRPPMPQPGAFAPQAVGRARKPPLINVGTHHRTWGIDRLVDRFLQRGGKQVVSLGAGSDTRFWRLMSRATPPDLARYVEIDFPHLTSPKAQRIARHRKLYQYLGPSSTAMPPPGHPYTVSKGGTQLSSPLYTLLPLDLRPSPSEPASSISAILSHHVLPQLDPRLPTLFLAECLFPYMSPEDSREIIKWFGETFCSCMGVVYEMVGLDDSFGNVMKRNLAVRNLSIPGSIFSTPESQAGRFTSPMLQGGKFDSAGAKTLWQIREEDVGPEELQRISKLEILDEIEELRLVLEHYVIAWGTKGECMSSISL.

The interval 17 to 61 is disordered; it reads AIQTPPPTDPNAAPAHRPAPRPALGRCRPPHRRRRRLRPPVRPPL. Residues 26–43 show a composition bias toward low complexity; it reads PNAAPAHRPAPRPALGRC. Positions 44–55 are enriched in basic residues; sequence RPPHRRRRRLRP. S-adenosyl-L-methionine-binding positions include Arg119, Gly142, Asp168, 224–225, and Glu259; that span reads DL.

It belongs to the methyltransferase superfamily. LCMT family.

The catalysed reaction is [phosphatase 2A protein]-C-terminal L-leucine + S-adenosyl-L-methionine = [phosphatase 2A protein]-C-terminal L-leucine methyl ester + S-adenosyl-L-homocysteine. Functionally, methylates the carboxyl group of the C-terminal leucine residue of protein phosphatase 2A catalytic subunits to form alpha-leucine ester residues. The polypeptide is Leucine carboxyl methyltransferase 1 (PPM1) (Cryptococcus neoformans var. neoformans serotype D (strain B-3501A) (Filobasidiella neoformans)).